A 190-amino-acid polypeptide reads, in one-letter code: Natural killer cells antigen CD94 (190 aa).

Topologically, residues 1–10 are cytoplasmic; it reads MAAFRTTAWR. A helical; Signal-anchor for type II membrane protein membrane pass occupies residues 11–31; sequence LISGVLGVICLVLMAALGVLL. Residues 32-190 lie on the Extracellular side of the membrane; it reads KNSLTKRSVQ…FRYICKQQLI (159 aa). 4 disulfide bridges follow: cysteine 69-cysteine 81, cysteine 72-cysteine 83, cysteine 100-cysteine 185, and cysteine 163-cysteine 177. Residues 79-186 form the C-type lectin domain; sequence YQCNCYFISN…CEKKFRYICK (108 aa). N-linked (GlcNAc...) asparagine glycosylation is found at asparagine 104 and asparagine 144.

As to quaternary structure, can form disulfide-bonded heterodimer with NKG2 family members KLRC1 and KLRC2. KLRD1-KLRC1 heterodimer interacts with peptide-bound MHC-E-B2M heterotrimeric complex. KLRD1 plays a prominent role in directly interacting with MHC-E. KLRD1-KLRC1 interacts with much higher affinity with peptide-bound MHC-E-B2M than KLRD1-KLRC2. Interacts with the adapter protein TYROBP/DAP12; this interaction is required for cell surface expression and cell activation.

Its subcellular location is the cell membrane. Its function is as follows. Immune receptor involved in self-nonself discrimination. In complex with KLRC1 or KLRC2 on cytotoxic and regulatory lymphocyte subsets, recognizes non-classical major histocompatibility (MHC) class Ib molecule MHC-E loaded with self-peptides derived from the signal sequence of classical MHC class Ia and non-classical MHC class Ib molecules. Enables cytotoxic cells to monitor the expression of MHC class I molecules in healthy cells and to tolerate self. Primarily functions as a ligand binding subunit as it lacks the capacity to signal. KLRD1-KLRC1 acts as an immune inhibitory receptor. Key inhibitory receptor on natural killer (NK) cells that regulates their activation and effector functions. Dominantly counteracts T cell receptor signaling on a subset of memory/effector CD8-positive T cells as part of an antigen-driven response to avoid autoimmunity. On intraepithelial CD8-positive gamma-delta regulatory T cells triggers TGFB1 secretion, which in turn limits the cytotoxic programming of intraepithelial CD8-positive alpha-beta T cells, distinguishing harmless from pathogenic antigens. In MHC-E-rich tumor microenvironment, acts as an immune inhibitory checkpoint and may contribute to progressive loss of effector functions of NK cells and tumor-specific T cells, a state known as cell exhaustion. Upon MHC-E-peptide binding, transmits intracellular signals through KLRC1 immunoreceptor tyrosine-based inhibition motifs (ITIMs) by recruiting INPP5D/SHIP-1 and INPPL1/SHIP-2 tyrosine phosphatases to ITIMs, and ultimately opposing signals transmitted by activating receptors through dephosphorylation of proximal signaling molecules. In terms of biological role, KLRD1-KLRC2 acts as an immune activating receptor. On cytotoxic lymphocyte subsets recognizes MHC-E loaded with signal sequence-derived peptides from non-classical MHC class Ib MHC-G molecules, likely playing a role in the generation and effector functions of adaptive NK cells and in maternal-fetal tolerance during pregnancy. Regulates the effector functions of terminally differentiated cytotoxic lymphocyte subsets, and in particular may play a role in adaptive NK cell response to viral infection. Upon MHC-E-peptide binding, transmits intracellular signals via the adapter protein TYROBP/DAP12, triggering the phosphorylation of proximal signaling molecules and cell activation. This is Natural killer cells antigen CD94 (KLRD1) from Bos taurus (Bovine).